The following is a 147-amino-acid chain: Arginine repressor (147 aa).

Belongs to the ArgR family.

It localises to the cytoplasm. It functions in the pathway amino-acid biosynthesis; L-arginine biosynthesis [regulation]. In terms of biological role, regulates arginine biosynthesis genes. In Chlamydia caviae (strain ATCC VR-813 / DSM 19441 / 03DC25 / GPIC) (Chlamydophila caviae), this protein is Arginine repressor.